The primary structure comprises 242 residues: Probable transcriptional regulatory protein Bcep18194_A5621 (242 aa).

The protein belongs to the TACO1 family.

The protein localises to the cytoplasm. This is Probable transcriptional regulatory protein Bcep18194_A5621 from Burkholderia lata (strain ATCC 17760 / DSM 23089 / LMG 22485 / NCIMB 9086 / R18194 / 383).